The primary structure comprises 327 residues: tRNA uridine(34) hydroxylase (327 aa).

The Rhodanese domain occupies 142-240 (DDPDTLVIDT…YLEQVPEAES (99 aa)). The active-site Cysteine persulfide intermediate is the Cys200.

This sequence belongs to the TrhO family.

The enzyme catalyses uridine(34) in tRNA + AH2 + O2 = 5-hydroxyuridine(34) in tRNA + A + H2O. Its function is as follows. Catalyzes oxygen-dependent 5-hydroxyuridine (ho5U) modification at position 34 in tRNAs. The polypeptide is tRNA uridine(34) hydroxylase (Synechococcus sp. (strain CC9605)).